Here is a 479-residue protein sequence, read N- to C-terminus: F-box/LRR-repeat protein 16 (479 aa).

The interval 1-62 (MSSPGIDGDP…PTLPPPSLAA (62 aa)) is disordered. A compositionally biased stretch (pro residues) spans 47–60 (CQPPPPPTLPPPSL). At Arg-92 the chain carries Omega-N-methylarginine. An F-box domain is found at 94–139 (PLATDEKILNGLFWYFSACEKCVLAQVCKAWRRVLYQPKFWAGLTP). LRR repeat units lie at residues 244–266 (ITSL…ISQL), 267–290 (LPNL…YFTA), 319–343 (LPNL…LVAE), 345–369 (LRKL…YVAC), 371–395 (LHRL…YLST), 396–420 (MSSL…HLLA), and 446–470 (LQEL…YFSQ).

As to quaternary structure, interacts with SKP1 and CUL1.

Substrate-recognition component of the SCF (SKP1-CUL1-F-box protein)-type E3 ubiquitin ligase complex. The polypeptide is F-box/LRR-repeat protein 16 (FBXL16) (Homo sapiens (Human)).